Consider the following 171-residue polypeptide: Peptide methionine sulfoxide reductase MsrA (171 aa).

The active site involves Cys12.

The protein belongs to the MsrA Met sulfoxide reductase family.

It catalyses the reaction L-methionyl-[protein] + [thioredoxin]-disulfide + H2O = L-methionyl-(S)-S-oxide-[protein] + [thioredoxin]-dithiol. The catalysed reaction is [thioredoxin]-disulfide + L-methionine + H2O = L-methionine (S)-S-oxide + [thioredoxin]-dithiol. Functionally, has an important function as a repair enzyme for proteins that have been inactivated by oxidation. Catalyzes the reversible oxidation-reduction of methionine sulfoxide in proteins to methionine. In Leuconostoc mesenteroides subsp. mesenteroides (strain ATCC 8293 / DSM 20343 / BCRC 11652 / CCM 1803 / JCM 6124 / NCDO 523 / NBRC 100496 / NCIMB 8023 / NCTC 12954 / NRRL B-1118 / 37Y), this protein is Peptide methionine sulfoxide reductase MsrA.